The following is a 196-amino-acid chain: Holliday junction branch migration complex subunit RuvA (196 aa).

A domain I region spans residues 1-63 (MYEYFKGIIS…EDAELLYGFA (63 aa)). Positions 64–142 (TEEEKQLFLS…AADGLAESKA (79 aa)) are domain II. The tract at residues 143–146 (PVQT) is flexible linker. The tract at residues 147–196 (VDNQELEEAMEAMLALGYKATELKKIKKFFEGTTDTAENYIKSALKMLVK) is domain III.

This sequence belongs to the RuvA family. Homotetramer. Forms an RuvA(8)-RuvB(12)-Holliday junction (HJ) complex. HJ DNA is sandwiched between 2 RuvA tetramers; dsDNA enters through RuvA and exits via RuvB. An RuvB hexamer assembles on each DNA strand where it exits the tetramer. Each RuvB hexamer is contacted by two RuvA subunits (via domain III) on 2 adjacent RuvB subunits; this complex drives branch migration. In the full resolvosome a probable DNA-RuvA(4)-RuvB(12)-RuvC(2) complex forms which resolves the HJ.

It is found in the cytoplasm. In terms of biological role, the RuvA-RuvB-RuvC complex processes Holliday junction (HJ) DNA during genetic recombination and DNA repair, while the RuvA-RuvB complex plays an important role in the rescue of blocked DNA replication forks via replication fork reversal (RFR). RuvA specifically binds to HJ cruciform DNA, conferring on it an open structure. The RuvB hexamer acts as an ATP-dependent pump, pulling dsDNA into and through the RuvAB complex. HJ branch migration allows RuvC to scan DNA until it finds its consensus sequence, where it cleaves and resolves the cruciform DNA. The sequence is that of Holliday junction branch migration complex subunit RuvA from Streptococcus gordonii (strain Challis / ATCC 35105 / BCRC 15272 / CH1 / DL1 / V288).